Here is a 121-residue protein sequence, read N- to C-terminus: Type II secretion system protein I (121 aa).

The propeptide at 1–6 (MRRQKG) is leader sequence. An N-methylmethionine modification is found at Met7. A helical membrane pass occupies residues 7 to 27 (MTLVEVLVALSVFALAGIAVL).

It belongs to the GSP I family. In terms of assembly, type II secretion is composed of four main components: the outer membrane complex, the inner membrane complex, the cytoplasmic secretion ATPase and the periplasm-spanning pseudopilus. Interacts with core component OutG. In terms of processing, cleaved by prepilin peptidase. Methylated by prepilin peptidase at the amino group of the N-terminal methionine once the leader sequence is cleaved by prepilin peptidase.

The protein resides in the cell inner membrane. In terms of biological role, component of the type II secretion system required for the energy-dependent secretion of extracellular factors such as proteases and toxins from the periplasm. Part of the pseudopilus tip complex that is critical for the recognition and binding of secretion substrates. This is Type II secretion system protein I (outI) from Pectobacterium carotovorum subsp. carotovorum (Erwinia carotovora subsp. carotovora).